We begin with the raw amino-acid sequence, 721 residues long: MAPSYDQPYSVLLDRNIYDPDNLCEGIDLRRHHAADLEDVGAFRCQEDWRRLVGPLERPFRGGLGPQFSFITVAVPNCIPERMEITSYALEFGFIHDDVIDEHIEDADLSDMEEGLEQGAKTGSIDERGASGKRVIAAQIMREMMAIDPERAMVVAKSWAAGVQHSARREELTNFQTLDEYIPYRSLDVGYMLWHGLVTFGCAITIPPEEEALCTEFLTPALCAASLVNDLFSFEKEKNDANIQNAVYIVMKEHGCDEAEGRERLKARIRQEMAKFVQIVKDTKTRSDLSDDTKRYIDVMQYTLSGNVVWSAQCPRYNLKAEWNELQMLRAKHGVAKYPATFPPADGSMDHIWKKGSTQGESKGEKRKRQSVNGTNGVNGTNGVKKPTISRVGVDSLQLNEVVSLALSTDLPNLTTDVVLQPYAYITSMPSKGFRDQAVDSINNWLKTPAKATKKIKEIINMLHTASLMLDDLEDNSPLRRGKPSTHNVYGASQTINSATYQFTHATALAAGLSNPDCLRIFNEEINELYVGQSYDLYWTHNIICPTFGEYLRMVDMKTGGLFRMLTRLMTAESPLNGQISDSELNPLGCLIGRFFQIRDDYQNLVSAEYAQQKGFAEDLDEGKYSFTLIHCIRTLEANPSLAGEQMQLRALLMKRRVEGKLTNEAKREILDTMKKTQSLEYTLEVLRELHTKLDNEVGRLEKKFGDDNFALRLMMEMLKV.

Residues 5-325 (YDQPYSVLLD…RYNLKAEWNE (321 aa)) form a (7Z)-ophiobola-7,19-dien-3-ol synthase region. Positions 97 and 101 each coordinate Mg(2+). Asp-97 is a substrate binding site. Residues 97 to 101 (DDVID) carry the DDXXD 1 motif. Residues 185 to 188 (RSLD), Asn-229, 233 to 237 (SFEKE), and 316 to 317 (RY) contribute to the substrate site. An NSE/DTE motif is present at residues 229 to 237 (NDLFSFEKE). The geranylfarnesyl diphosphate synthase stretch occupies residues 326–721 (LQMLRAKHGV…LRLMMEMLKV (396 aa)). Residues 348-387 (SMDHIWKKGSTQGESKGEKRKRQSVNGTNGVNGTNGVKKP) form a disordered region. Low complexity predominate over residues 372 to 384 (VNGTNGVNGTNGV). Isopentenyl diphosphate-binding residues include Lys-432, Arg-435, and His-464. Residues Asp-471 and Asp-475 each contribute to the Mg(2+) site. A DDXXD 2 motif is present at residues 471 to 475 (DDLED). Arg-480 lines the dimethylallyl diphosphate pocket. Arg-481 provides a ligand contact to isopentenyl diphosphate. Residues Lys-558, Thr-559, Gln-597, Asn-604, Lys-614, and Lys-624 each coordinate dimethylallyl diphosphate.

In the N-terminal section; belongs to the terpene synthase family. The protein in the C-terminal section; belongs to the FPP/GGPP synthase family. It depends on Mg(2+) as a cofactor.

It carries out the reaction isopentenyl diphosphate + (2E,6E)-farnesyl diphosphate = (2E,6E,10E)-geranylgeranyl diphosphate + diphosphate. The catalysed reaction is isopentenyl diphosphate + (2E,6E,10E)-geranylgeranyl diphosphate = (2E,6E,10E,14E)-geranylfarnesyl diphosphate + diphosphate. It catalyses the reaction (2E,6E,10E,14E)-geranylfarnesyl diphosphate + H2O = ophiobolin F + diphosphate. It participates in secondary metabolite biosynthesis; terpenoid biosynthesis. Its function is as follows. Bifunctional sesterterpene synthase; part of the gene cluster that mediates the biosynthesis of the sesterterpenes ophiobolins, fungal phytotoxins with potential anti-cancer activities. The first step of the pathway is performed by the sesterterpene synthase oblA that possesses both prenyl transferase and terpene cyclase activity, converting isopentenyl diphosphate and dimethylallyl diphosphate into geranylfarnesyl diphosphate (GFPP) and further converting GFPP into ophiobolin F, respectively. Other sesterterpenoids (C(25) terpenoids) are found as minor products of oblA. The cytochrome P450 monooxygenase oblB then catalyzes a four-step oxidative transformation of ophiobolin F to yield ophiobolin C. The FAD-dependent oxidoreductase oblC might be involved in a later oxidation step that produces ophiobolin A. The protein is Ophiobolin F synthase oblA of Cochliobolus heterostrophus (strain C5 / ATCC 48332 / race O) (Southern corn leaf blight fungus).